A 375-amino-acid polypeptide reads, in one-letter code: Palmitoyltransferase PFA4 (375 aa).

The Cytoplasmic portion of the chain corresponds to 1–9 (MAVLVKWPW). A helical membrane pass occupies residues 10-30 (LGVAIPCFLISFTGYFAHFFV). At 31 to 33 (LTN) the chain is on the lumenal side. Residues 34-54 (FLSFKELLWFQVSLSMIWISY) form a helical membrane-spanning segment. The Cytoplasmic portion of the chain corresponds to 55-121 (WKAIYKNPGR…MNCVGYKNFP (67 aa)). The region spanning 78 to 128 (NYCTKCETYKPERTHHCKRCNQCVLVMDHHCPWTMNCVGYKNFPHFIRFLF) is the DHHC domain. C108 (S-palmitoyl cysteine intermediate) is an active-site residue. The chain crosses the membrane as a helical span at residues 122–142 (HFIRFLFWIIATTGILLHYFV). At 143-164 (KRIKFTWVNRYATANLVSKQEL) the chain is on the lumenal side. Residues 165–185 (IFLTILTPLDAFILLTISLLF) form a helical membrane-spanning segment. Topologically, residues 186–375 (VRCVKNQIVN…EHFGVDVEVE (190 aa)) are cytoplasmic.

The protein belongs to the DHHC palmitoyltransferase family. PFA4 subfamily.

The protein localises to the endoplasmic reticulum membrane. It catalyses the reaction L-cysteinyl-[protein] + hexadecanoyl-CoA = S-hexadecanoyl-L-cysteinyl-[protein] + CoA. In terms of biological role, mediates the reversible addition of palmitate to target proteins, thereby regulating their membrane association and biological function. The protein is Palmitoyltransferase PFA4 of Eremothecium gossypii (strain ATCC 10895 / CBS 109.51 / FGSC 9923 / NRRL Y-1056) (Yeast).